The primary structure comprises 564 residues: Iron-sensing transcriptional repressor (564 aa).

Residues 12-36 form a GATA-type 1 zinc finger; sequence CSNCHKTTTSLWRRGPDNSLLCNAC. Residues 100–170 are disordered; that stretch reads ASKSQSGRKS…SSPPHEPSVT (71 aa). Ser109 is modified (phosphoserine). The span at 109–120 shows a compositional bias: low complexity; that stretch reads SLSPNPSSVPSS. A compositionally biased stretch (polar residues) spans 135-148; sequence QIVSDTTTETSNGT. Residues 172-196 form a GATA-type 2 zinc finger; that stretch reads CQNCATTNTPLWRRDESGNPICNAC. Disordered regions lie at residues 226-285, 381-409, and 443-496; these read GNAN…NTGV, DSSKQLSESTTSNTDNNGVATANQSNPLG, and LLNP…VQGS. Polar residues-rich tracts occupy residues 240–253, 260–271, 381–407, and 450–486; these read SGDSGSSVKQQSTR, SFPNGNGHASGN, DSSKQLSESTTSNTDNNGVATANQSNP, and PSNSDKQPSMSNGPKSEVSPSQSQQAPLIQSSTSPVS.

In terms of assembly, interacts with tup11.

Its subcellular location is the nucleus. Activated by iron. Functionally, transcriptional repressor that binds the consensus promoter sequence 5'-[AT]GATAA-3' during iron-replete conditions to down-regulate transcription of target genes. Represses the expression of the iron transporter fio1 in response to high iron concentrations. Also represses the expression of str1, str2 and str3. Represses the expression of shu1 in presence of iron. The sequence is that of Iron-sensing transcriptional repressor from Schizosaccharomyces pombe (strain 972 / ATCC 24843) (Fission yeast).